We begin with the raw amino-acid sequence, 296 residues long: Nucleotide-binding protein SPCG_1551 (296 aa).

ATP is bound at residue 13–20 (GMSGAGKT). Position 63–66 (63–66 (DMRS)) interacts with GTP.

Belongs to the RapZ-like family.

Displays ATPase and GTPase activities. This Streptococcus pneumoniae (strain CGSP14) protein is Nucleotide-binding protein SPCG_1551.